The primary structure comprises 307 residues: Thiamine-monophosphate kinase (307 aa).

The Mg(2+) site is built by Asp26, Thr37, Thr38, and Asp39. His46 contributes to the substrate binding site. The Mg(2+) site is built by Asp68 and Asp117. ATP-binding positions include Gly116–Asp117 and Arg140. Asp207 contributes to the Mg(2+) binding site. Thr209 is a binding site for ATP. Asp210 contributes to the Mg(2+) binding site. Substrate contacts are provided by Glu254 and Phe304.

Belongs to the thiamine-monophosphate kinase family.

It catalyses the reaction thiamine phosphate + ATP = thiamine diphosphate + ADP. It participates in cofactor biosynthesis; thiamine diphosphate biosynthesis; thiamine diphosphate from thiamine phosphate: step 1/1. Functionally, catalyzes the ATP-dependent phosphorylation of thiamine-monophosphate (TMP) to form thiamine-pyrophosphate (TPP), the active form of vitamin B1. This is Thiamine-monophosphate kinase from Leptospira interrogans serogroup Icterohaemorrhagiae serovar Lai (strain 56601).